We begin with the raw amino-acid sequence, 429 residues long: Glucose-1-phosphate adenylyltransferase (429 aa).

Residues Gly-162, 177–178, and Ser-209 each bind alpha-D-glucose 1-phosphate; that span reads EK.

The protein belongs to the bacterial/plant glucose-1-phosphate adenylyltransferase family. Homotetramer.

The enzyme catalyses alpha-D-glucose 1-phosphate + ATP + H(+) = ADP-alpha-D-glucose + diphosphate. The protein operates within glycan biosynthesis; glycogen biosynthesis. Functionally, involved in the biosynthesis of ADP-glucose, a building block required for the elongation reactions to produce glycogen. Catalyzes the reaction between ATP and alpha-D-glucose 1-phosphate (G1P) to produce pyrophosphate and ADP-Glc. This Rippkaea orientalis (strain PCC 8801 / RF-1) (Cyanothece sp. (strain PCC 8801)) protein is Glucose-1-phosphate adenylyltransferase.